Reading from the N-terminus, the 57-residue chain is Lantibiotic nukacin (57 aa).

The propeptide occupies 1-30; it reads MENSKVMKDIEVANLLEEVQEDELNEVLGA. Residues 39-44 constitute a cross-link (beta-methyllanthionine (Thr-Cys)); sequence TVSHDC. 2 cross-links (lanthionine (Ser-Cys)) span residues 41–55 and 48–56; these read SHDC…VFTC and SFQFVFTCC. At Thr-54 the chain carries 2,3-didehydrobutyrine.

Post-translationally, maturation of lantibiotics involves the enzymatic conversion of Thr, and Ser into dehydrated AA and the formation of thioether bonds with cysteine. This is followed by membrane translocation and cleavage of the modified precursor.

The protein resides in the secreted. Functionally, lanthionine-containing peptide antibiotic (lantibiotic) active on Gram-positive bacteria. The bactericidal activity of lantibiotics is based on depolarization of energized bacterial cytoplasmic membranes, initiated by the formation of aqueous transmembrane pores. This is Lantibiotic nukacin from Staphylococcus simulans.